The following is a 393-amino-acid chain: S-adenosylmethionine synthase (393 aa).

Histidine 17 contributes to the ATP binding site. Aspartate 19 lines the Mg(2+) pocket. Glutamate 45 lines the K(+) pocket. Positions 58 and 104 each coordinate L-methionine. The interval 104 to 114 is flexible loop; sequence QSAEIAQGVEE. ATP-binding positions include 171-173, aspartate 245, 251-252, alanine 268, and lysine 272; these read DAK and RK. Aspartate 245 is a binding site for L-methionine. Residue lysine 276 coordinates L-methionine.

The protein belongs to the AdoMet synthase family. In terms of assembly, homotetramer; dimer of dimers. The cofactor is Mg(2+). Requires K(+) as cofactor.

It is found in the cytoplasm. The enzyme catalyses L-methionine + ATP + H2O = S-adenosyl-L-methionine + phosphate + diphosphate. It participates in amino-acid biosynthesis; S-adenosyl-L-methionine biosynthesis; S-adenosyl-L-methionine from L-methionine: step 1/1. In terms of biological role, catalyzes the formation of S-adenosylmethionine (AdoMet) from methionine and ATP. The overall synthetic reaction is composed of two sequential steps, AdoMet formation and the subsequent tripolyphosphate hydrolysis which occurs prior to release of AdoMet from the enzyme. This is S-adenosylmethionine synthase from Hyphomonas neptunium (strain ATCC 15444).